We begin with the raw amino-acid sequence, 736 residues long: MKNEPKITPELVAAHGLKPDEYERILKLIGREPTFTELGIFSAMWNEHCSYKSSRIHLRGLPTKAPWVIQGPGENAGVIDIGDGQAVVFKMESHNHPSYIEPYQGATTGVGGILRDVFTMGARPIACLNALSFGAPEHAKTRHLVSGVVAGVGGYGNSFGVPTVGGQVRFHTRYDGNILVNAMAVGLADADKIFYAAASGVNMPIVYLGSKTGRDGIHGASMASAEFDDKSEEKRPTVQVGDPFAEKLLLEACLEIMEKGCVIAIQDMGAAGLTCSAVEMGAKGDLGVDLDLDAVPTRETGMSAYEMMLSESQERMLMVLKPEKEKEAEAIFKKWGLDFAVVGYTTPSKRFVVKHGGDVMADLPIKELGDEAPLYDRPHVPSAALPVVHAREVMAPMGVGSALEKLIGTPDMCSKRWVWEQYDHVILGNTMQRPGGDAAVVRVQDGPKGLALTVDVTPRYCEADPFEGGKQAVAEAWRNITAVGGKPLAITDNLNFGNPERPEIMGQFVGCLKGISEACRTLDFPVVSGNVSLYNETNGRAILPTPSIGGVGLLDDFTKSASLAFKAEGEAILLIGETHGWLGQSVYLRDICGREEGAPPPVDLAAEKRNGDCVRGMIHAGTATAVHDLSDGGLLIALAEMAMASGIGAKLLAAPTSLVSQAYWFGEDQARYLVTVPETEAGRVLAKMRGCEVPCVRIGTTGGDAIAIAGEAPVTIDKLRTSFERWLPEYMGGKAA.

Residue His-48 is part of the active site. ATP is bound by residues Tyr-51 and Lys-90. Residue Glu-92 coordinates Mg(2+). Substrate is bound by residues Ser-93–His-96 and Arg-115. His-94 functions as the Proton acceptor in the catalytic mechanism. Asp-116 contributes to the Mg(2+) binding site. Gln-239 lines the substrate pocket. Asp-267 contacts Mg(2+). Glu-311–Gln-313 is a substrate binding site. Residues Asp-492 and Gly-529 each contribute to the ATP site. Asn-530 provides a ligand contact to Mg(2+). Ser-532 provides a ligand contact to substrate.

This sequence belongs to the FGAMS family. As to quaternary structure, monomer. Part of the FGAM synthase complex composed of 1 PurL, 1 PurQ and 2 PurS subunits.

Its subcellular location is the cytoplasm. It catalyses the reaction N(2)-formyl-N(1)-(5-phospho-beta-D-ribosyl)glycinamide + L-glutamine + ATP + H2O = 2-formamido-N(1)-(5-O-phospho-beta-D-ribosyl)acetamidine + L-glutamate + ADP + phosphate + H(+). It participates in purine metabolism; IMP biosynthesis via de novo pathway; 5-amino-1-(5-phospho-D-ribosyl)imidazole from N(2)-formyl-N(1)-(5-phospho-D-ribosyl)glycinamide: step 1/2. Functionally, part of the phosphoribosylformylglycinamidine synthase complex involved in the purines biosynthetic pathway. Catalyzes the ATP-dependent conversion of formylglycinamide ribonucleotide (FGAR) and glutamine to yield formylglycinamidine ribonucleotide (FGAM) and glutamate. The FGAM synthase complex is composed of three subunits. PurQ produces an ammonia molecule by converting glutamine to glutamate. PurL transfers the ammonia molecule to FGAR to form FGAM in an ATP-dependent manner. PurS interacts with PurQ and PurL and is thought to assist in the transfer of the ammonia molecule from PurQ to PurL. The polypeptide is Phosphoribosylformylglycinamidine synthase subunit PurL (Bradyrhizobium diazoefficiens (strain JCM 10833 / BCRC 13528 / IAM 13628 / NBRC 14792 / USDA 110)).